The primary structure comprises 205 residues: GTP cyclohydrolase-2 (205 aa).

49–53 contacts GTP; sequence RLHSE. Residues C54, C65, and C67 each coordinate Zn(2+). GTP-binding positions include Q70, 92–94, and T114; that span reads EGR. Catalysis depends on D126, which acts as the Proton acceptor. R128 serves as the catalytic Nucleophile. 2 residues coordinate GTP: T149 and K154.

It belongs to the GTP cyclohydrolase II family. Zn(2+) is required as a cofactor.

The enzyme catalyses GTP + 4 H2O = 2,5-diamino-6-hydroxy-4-(5-phosphoribosylamino)-pyrimidine + formate + 2 phosphate + 3 H(+). It functions in the pathway cofactor biosynthesis; riboflavin biosynthesis; 5-amino-6-(D-ribitylamino)uracil from GTP: step 1/4. In terms of biological role, catalyzes the conversion of GTP to 2,5-diamino-6-ribosylamino-4(3H)-pyrimidinone 5'-phosphate (DARP), formate and pyrophosphate. The sequence is that of GTP cyclohydrolase-2 from Pseudomonas aeruginosa (strain LESB58).